The sequence spans 342 residues: Protein RecA (342 aa).

It belongs to the RecA family.

Its subcellular location is the cytoplasm. Its function is as follows. Can catalyze the hydrolysis of ATP in the presence of single-stranded DNA, the ATP-dependent uptake of single-stranded DNA by duplex DNA, and the ATP-dependent hybridization of homologous single-stranded DNAs. It interacts with LexA causing its activation and leading to its autocatalytic cleavage. The sequence is that of Protein RecA from Pectobacterium carotovorum (Erwinia carotovora).